The primary structure comprises 429 residues: [LysW]-aminoadipate semialdehyde transaminase (429 aa).

Pyridoxal 5'-phosphate contacts are provided by residues 112 to 113 (GT) and Phe139. Arg142 serves as a coordination point for substrate. 226 to 229 (DEIQ) is a pyridoxal 5'-phosphate binding site. Lys255 bears the N6-(pyridoxal phosphate)lysine mark. Residue Thr283 participates in substrate binding. Thr284 serves as a coordination point for pyridoxal 5'-phosphate. The disordered stretch occupies residues 408–429 (LRAQQSEMGQQQVSQGESVQTE). Residues 411 to 429 (QQSEMGQQQVSQGESVQTE) show a composition bias toward low complexity.

It belongs to the class-III pyridoxal-phosphate-dependent aminotransferase family. LysJ subfamily. Homodimer. Pyridoxal 5'-phosphate serves as cofactor.

The protein resides in the cytoplasm. It carries out the reaction [amino-group carrier protein]-C-terminal-gamma-(L-lysyl)-L-glutamate + 2-oxoglutarate = [amino-group carrier protein]-C-terminal-N-(1-carboxy-5-oxopentan-1-yl)-L-glutamine + L-glutamate. It functions in the pathway amino-acid biosynthesis; L-lysine biosynthesis via AAA pathway; L-lysine from L-alpha-aminoadipate (Thermus route): step 4/5. Its function is as follows. Catalyzes the transfer of the amino group of L-glutamate to [LysW]-aminoadipate 6-semialdehyde, generating [LysW]-gamma-L-lysine. The chain is [LysW]-aminoadipate semialdehyde transaminase from Deinococcus radiodurans (strain ATCC 13939 / DSM 20539 / JCM 16871 / CCUG 27074 / LMG 4051 / NBRC 15346 / NCIMB 9279 / VKM B-1422 / R1).